Consider the following 195-residue polypeptide: Pyruvoyl-dependent arginine decarboxylase AaxB (195 aa).

S53 is subject to Pyruvic acid (Ser).

The protein belongs to the pyruvoyl-dependent arginine decarboxylase family. In terms of assembly, trimer of an alpha-beta dimer. Pyruvate is required as a cofactor.

The protein localises to the cytoplasm. It catalyses the reaction L-arginine + H(+) = agmatine + CO2. With respect to regulation, inhibited by argininamide. Functionally, part of the AaxABC system, catalyzes the decarboxylation of L-arginine. The arginine uptake by the bacterium in the macrophage may be a virulence factor against the host innate immune response. In Chlamydia pneumoniae (Chlamydophila pneumoniae), this protein is Pyruvoyl-dependent arginine decarboxylase AaxB (aaxB).